The chain runs to 255 residues: tRNA (guanine-N(1)-)-methyltransferase (255 aa).

S-adenosyl-L-methionine contacts are provided by residues Gly113 and Ile133–Leu138.

It belongs to the RNA methyltransferase TrmD family. Homodimer.

Its subcellular location is the cytoplasm. It catalyses the reaction guanosine(37) in tRNA + S-adenosyl-L-methionine = N(1)-methylguanosine(37) in tRNA + S-adenosyl-L-homocysteine + H(+). In terms of biological role, specifically methylates guanosine-37 in various tRNAs. This is tRNA (guanine-N(1)-)-methyltransferase from Salmonella schwarzengrund (strain CVM19633).